We begin with the raw amino-acid sequence, 208 residues long: Ribonuclease HII (208 aa).

The RNase H type-2 domain occupies Asp13–Ala202. A divalent metal cation is bound by residues Asp19, Glu20, and Asp111.

It belongs to the RNase HII family. The cofactor is Mn(2+). Mg(2+) is required as a cofactor.

The protein localises to the cytoplasm. It carries out the reaction Endonucleolytic cleavage to 5'-phosphomonoester.. Its function is as follows. Endonuclease that specifically degrades the RNA of RNA-DNA hybrids. The polypeptide is Ribonuclease HII (Pseudomonas fluorescens (strain ATCC BAA-477 / NRRL B-23932 / Pf-5)).